A 198-amino-acid polypeptide reads, in one-letter code: Beta-crystallin A1-1 (198 aa).

An N-terminal arm region spans residues 1–13 (MAQINPLPVPLGP). 2 Beta/gamma crystallin 'Greek key' domains span residues 14–53 (WKIT…KVEC) and 54–100 (GAWI…RPIC). Residues 101–106 (SANHKE) are connecting peptide. Beta/gamma crystallin 'Greek key' domains follow at residues 107 to 148 (SKLV…KVQC) and 149 to 197 (GAWV…RRIQ).

The protein belongs to the beta/gamma-crystallin family. As to quaternary structure, homo/heterodimer, or complexes of higher-order. The structure of beta-crystallin oligomers seems to be stabilized through interactions between the N-terminal arms. In terms of processing, the N-terminus is blocked.

Crystallins are the dominant structural components of the vertebrate eye lens. In Aquarana catesbeiana (American bullfrog), this protein is Beta-crystallin A1-1.